The primary structure comprises 123 residues: Large ribosomal subunit protein bL19 (123 aa).

The protein belongs to the bacterial ribosomal protein bL19 family.

In terms of biological role, this protein is located at the 30S-50S ribosomal subunit interface and may play a role in the structure and function of the aminoacyl-tRNA binding site. In Ureaplasma urealyticum serovar 10 (strain ATCC 33699 / Western), this protein is Large ribosomal subunit protein bL19.